We begin with the raw amino-acid sequence, 336 residues long: Probable G-protein coupled receptor 160 (336 aa).

At 1-21 (MTALPSKNCSFQYQSHQAPRS) the chain is on the extracellular side. A glycan (N-linked (GlcNAc...) asparagine) is linked at Asn8. Residues 22-42 (LDATCLLLLIILGKVLLNVLI) traverse the membrane as a helical segment. At 43–56 (LRVKRKDTSWSFME) the chain is on the cytoplasmic side. Residues 57 to 77 (YFCFSLALVDLLLLVNISVLT) traverse the membrane as a helical segment. The Extracellular segment spans residues 78–95 (YFRDFVVLGIRFTNYHIC). Residues 96 to 116 (LLTQIVSFAYGFLHYPVCSLA) form a helical membrane-spanning segment. Residues 117-136 (CIDYWCNLSRATKPSSRWQK) lie on the Cytoplasmic side of the membrane. Residues 137 to 157 (LLYLLTVILTWISVLAYVLGD) form a helical membrane-spanning segment. Residues 158–187 (PAISASLKTHKTSVNQCPSYVSTQSHWLSL) are Extracellular-facing. A helical membrane pass occupies residues 188–208 (SMLMILSVAFLISWQEVVALI). Over 209–243 (QAIRIASYKNKAVLYFPFPPHTSYTVSPRAVLLPR) the chain is Cytoplasmic. Residues 244-264 (LIVCFLGTWFPFVALQVLILS) form a helical membrane-spanning segment. The Extracellular segment spans residues 265–272 (LRVQIPAY). Residues 273–293 (IEMNVPWLYFVNSFLIAAVYW) form a helical membrane-spanning segment. Over 294–336 (FNCHKLYWRDGMFPVDPFINWKCCFVPVHRLKQVERPMSIIIC) the chain is Cytoplasmic.

The protein belongs to the G-protein coupled receptor 1 family.

Its subcellular location is the cell membrane. In terms of biological role, orphan receptor. The protein is Probable G-protein coupled receptor 160 (Gpr160) of Rattus norvegicus (Rat).